We begin with the raw amino-acid sequence, 209 residues long: Large ribosomal subunit protein uL3 (209 aa).

An N5-methylglutamine modification is found at glutamine 150.

It belongs to the universal ribosomal protein uL3 family. Part of the 50S ribosomal subunit. Forms a cluster with proteins L14 and L19. Post-translationally, methylated by PrmB.

Functionally, one of the primary rRNA binding proteins, it binds directly near the 3'-end of the 23S rRNA, where it nucleates assembly of the 50S subunit. The sequence is that of Large ribosomal subunit protein uL3 from Aliivibrio salmonicida (strain LFI1238) (Vibrio salmonicida (strain LFI1238)).